The chain runs to 116 residues: MSRGGSAGGGQSSLGYLFGGNEAPKPAAKPAPAAAPAPAPAPAPAAAVAAPAEKPSPAKADATKQIPAGIQGSRSNNNYHRADGQNTGNFLTDRPSTKVHAAPGGGSSLGYLFGGN.

Positions 1-12 are enriched in gly residues; sequence MSRGGSAGGGQS. A disordered region spans residues 1 to 116; it reads MSRGGSAGGG…SSLGYLFGGN (116 aa). Residues 27–43 are compositionally biased toward pro residues; sequence AAKPAPAAAPAPAPAPA. Positions 44–60 are enriched in low complexity; the sequence is PAAAVAAPAEKPSPAKA. Positions 72-90 are enriched in polar residues; that stretch reads GSRSNNNYHRADGQNTGNF. The segment covering 103-116 has biased composition (gly residues); the sequence is PGGGSSLGYLFGGN.

The protein belongs to the SPIRAL1 family.

Its function is as follows. Acts in maintaining the cortical microtubules organization essential for anisotropic cell growth. The chain is Protein SPIRAL1-like 1 from Oryza sativa subsp. japonica (Rice).